The sequence spans 225 residues: Cytidylate kinase (225 aa).

12-20 (GPSGAGKGT) provides a ligand contact to ATP.

Belongs to the cytidylate kinase family. Type 1 subfamily.

The protein resides in the cytoplasm. The catalysed reaction is CMP + ATP = CDP + ADP. It catalyses the reaction dCMP + ATP = dCDP + ADP. This Stenotrophomonas maltophilia (strain R551-3) protein is Cytidylate kinase.